Here is a 121-residue protein sequence, read N- to C-terminus: Small ribosomal subunit protein uS13 (121 aa).

Residues 93 to 121 are disordered; that stretch reads RGLPMRGQRTRTNARTRKGPRKSAAALKK.

It belongs to the universal ribosomal protein uS13 family. Part of the 30S ribosomal subunit. Forms a loose heterodimer with protein S19. Forms two bridges to the 50S subunit in the 70S ribosome.

Its function is as follows. Located at the top of the head of the 30S subunit, it contacts several helices of the 16S rRNA. In the 70S ribosome it contacts the 23S rRNA (bridge B1a) and protein L5 of the 50S subunit (bridge B1b), connecting the 2 subunits; these bridges are implicated in subunit movement. Contacts the tRNAs in the A and P-sites. In Methylibium petroleiphilum (strain ATCC BAA-1232 / LMG 22953 / PM1), this protein is Small ribosomal subunit protein uS13.